Reading from the N-terminus, the 338-residue chain is Ketol-acid reductoisomerase (NADP(+)) (338 aa).

A KARI N-terminal Rossmann domain is found at 1 to 181 (MKVFYDKDAD…GGGRAGIIET (181 aa)). Residues 24–27 (YGSQ), R47, and S52 each bind NADP(+). H107 is a catalytic residue. NADP(+) is bound at residue G133. The 146-residue stretch at 182–327 (NFREETETDL…SKLRAMMPWI (146 aa)) folds into the KARI C-terminal knotted domain. Mg(2+) is bound by residues D190, E194, E226, and E230. Residue S251 coordinates substrate.

The protein belongs to the ketol-acid reductoisomerase family. The cofactor is Mg(2+).

It catalyses the reaction (2R)-2,3-dihydroxy-3-methylbutanoate + NADP(+) = (2S)-2-acetolactate + NADPH + H(+). The catalysed reaction is (2R,3R)-2,3-dihydroxy-3-methylpentanoate + NADP(+) = (S)-2-ethyl-2-hydroxy-3-oxobutanoate + NADPH + H(+). Its pathway is amino-acid biosynthesis; L-isoleucine biosynthesis; L-isoleucine from 2-oxobutanoate: step 2/4. It functions in the pathway amino-acid biosynthesis; L-valine biosynthesis; L-valine from pyruvate: step 2/4. Involved in the biosynthesis of branched-chain amino acids (BCAA). Catalyzes an alkyl-migration followed by a ketol-acid reduction of (S)-2-acetolactate (S2AL) to yield (R)-2,3-dihydroxy-isovalerate. In the isomerase reaction, S2AL is rearranged via a Mg-dependent methyl migration to produce 3-hydroxy-3-methyl-2-ketobutyrate (HMKB). In the reductase reaction, this 2-ketoacid undergoes a metal-dependent reduction by NADPH to yield (R)-2,3-dihydroxy-isovalerate. The sequence is that of Ketol-acid reductoisomerase (NADP(+)) from Paraburkholderia xenovorans (strain LB400).